A 477-amino-acid chain; its full sequence is UDP-N-acetylmuramate--L-alanine ligase (477 aa).

Residue 117–123 participates in ATP binding; that stretch reads GTHGKTT.

The protein belongs to the MurCDEF family.

Its subcellular location is the cytoplasm. It carries out the reaction UDP-N-acetyl-alpha-D-muramate + L-alanine + ATP = UDP-N-acetyl-alpha-D-muramoyl-L-alanine + ADP + phosphate + H(+). It functions in the pathway cell wall biogenesis; peptidoglycan biosynthesis. Functionally, cell wall formation. The protein is UDP-N-acetylmuramate--L-alanine ligase of Phenylobacterium zucineum (strain HLK1).